Consider the following 75-residue polypeptide: UPF0352 protein YejL (75 aa).

The protein belongs to the UPF0352 family.

This is UPF0352 protein YejL from Escherichia coli O127:H6 (strain E2348/69 / EPEC).